A 239-amino-acid polypeptide reads, in one-letter code: Ubiquinone biosynthesis O-methyltransferase (239 aa).

S-adenosyl-L-methionine contacts are provided by Arg44, Gly63, Asp84, and Met128.

This sequence belongs to the methyltransferase superfamily. UbiG/COQ3 family.

The enzyme catalyses a 3-demethylubiquinol + S-adenosyl-L-methionine = a ubiquinol + S-adenosyl-L-homocysteine + H(+). The catalysed reaction is a 3-(all-trans-polyprenyl)benzene-1,2-diol + S-adenosyl-L-methionine = a 2-methoxy-6-(all-trans-polyprenyl)phenol + S-adenosyl-L-homocysteine + H(+). It participates in cofactor biosynthesis; ubiquinone biosynthesis. O-methyltransferase that catalyzes the 2 O-methylation steps in the ubiquinone biosynthetic pathway. The chain is Ubiquinone biosynthesis O-methyltransferase from Xanthomonas axonopodis pv. citri (strain 306).